Reading from the N-terminus, the 175-residue chain is ATP synthase subunit delta (175 aa).

It belongs to the ATPase delta chain family. As to quaternary structure, F-type ATPases have 2 components, F(1) - the catalytic core - and F(0) - the membrane proton channel. F(1) has five subunits: alpha(3), beta(3), gamma(1), delta(1), epsilon(1). F(0) has three main subunits: a(1), b(2) and c(10-14). The alpha and beta chains form an alternating ring which encloses part of the gamma chain. F(1) is attached to F(0) by a central stalk formed by the gamma and epsilon chains, while a peripheral stalk is formed by the delta and b chains.

The protein localises to the cell inner membrane. F(1)F(0) ATP synthase produces ATP from ADP in the presence of a proton or sodium gradient. F-type ATPases consist of two structural domains, F(1) containing the extramembraneous catalytic core and F(0) containing the membrane proton channel, linked together by a central stalk and a peripheral stalk. During catalysis, ATP synthesis in the catalytic domain of F(1) is coupled via a rotary mechanism of the central stalk subunits to proton translocation. Functionally, this protein is part of the stalk that links CF(0) to CF(1). It either transmits conformational changes from CF(0) to CF(1) or is implicated in proton conduction. The polypeptide is ATP synthase subunit delta (Xylella fastidiosa (strain M12)).